Reading from the N-terminus, the 443-residue chain is MKIGIINTKIRTVFSAFACMIAASLVCTMPARAVVEININKGVIEPLPIAITDFLSADQLGSNITSVIAADLERSGLFAPIDKGAFIEKISNPDAAPRFEDWKVINAQALVTGRITKQPDGRLKAEFRLWDTFGGQQMIGQQFFTTPDNWRRVAHIIADAIYERLTGDKGYFDTRVVFVDESGPAQKRVKRLAIMDQDGANVRFISDGRALSLTPRFSPNRQEVTYMSFEGGSPKVYLLQLETGQRELVGNFPGMTIAPRFSPDGQKVVMSLLQDDGSANIYTMDLRNRTTTRLTSSQAIDTGASYSPDGSQIVFTSDRGGRPQLYVMGADGSNPRRISMGDGSYSTPVWSPRGDLIAFTKQSQGQFSIGVMKTDGSGERLLTSGFHNEGPTWAPNGRVLMFFRKAAGAGGPKLFTIDLTGRNERQIQTPNFASDPAWSPLLE.

An N-terminal signal peptide occupies residues 1–33; the sequence is MKIGIINTKIRTVFSAFACMIAASLVCTMPARA.

The protein belongs to the TolB family. In terms of assembly, the Tol-Pal system is composed of five core proteins: the inner membrane proteins TolA, TolQ and TolR, the periplasmic protein TolB and the outer membrane protein Pal. They form a network linking the inner and outer membranes and the peptidoglycan layer.

Its subcellular location is the periplasm. In terms of biological role, part of the Tol-Pal system, which plays a role in outer membrane invagination during cell division and is important for maintaining outer membrane integrity. The chain is Tol-Pal system protein TolB from Brucella abortus (strain S19).